We begin with the raw amino-acid sequence, 252 residues long: 3-dehydroquinate dehydratase (252 aa).

Residues serine 21, 46–48, and arginine 82 each bind 3-dehydroquinate; that span reads EWR. Catalysis depends on histidine 143, which acts as the Proton donor/acceptor. Lysine 170 (schiff-base intermediate with substrate) is an active-site residue. 3 residues coordinate 3-dehydroquinate: arginine 213, serine 232, and glutamine 236.

Belongs to the type-I 3-dehydroquinase family. Homodimer.

It carries out the reaction 3-dehydroquinate = 3-dehydroshikimate + H2O. Its pathway is metabolic intermediate biosynthesis; chorismate biosynthesis; chorismate from D-erythrose 4-phosphate and phosphoenolpyruvate: step 3/7. Involved in the third step of the chorismate pathway, which leads to the biosynthesis of aromatic amino acids. Catalyzes the cis-dehydration of 3-dehydroquinate (DHQ) and introduces the first double bond of the aromatic ring to yield 3-dehydroshikimate. The chain is 3-dehydroquinate dehydratase from Escherichia coli O139:H28 (strain E24377A / ETEC).